The primary structure comprises 201 residues: LexA repressor (201 aa).

Residues 28–48 constitute a DNA-binding region (H-T-H motif); the sequence is RAEIAARLGFRSPNAAEEHLK. Catalysis depends on for autocatalytic cleavage activity residues Ser-118 and Lys-155.

It belongs to the peptidase S24 family. In terms of assembly, homodimer.

The enzyme catalyses Hydrolysis of Ala-|-Gly bond in repressor LexA.. Its function is as follows. Represses a number of genes involved in the response to DNA damage (SOS response), including recA and lexA. In the presence of single-stranded DNA, RecA interacts with LexA causing an autocatalytic cleavage which disrupts the DNA-binding part of LexA, leading to derepression of the SOS regulon and eventually DNA repair. The protein is LexA repressor of Photorhabdus laumondii subsp. laumondii (strain DSM 15139 / CIP 105565 / TT01) (Photorhabdus luminescens subsp. laumondii).